The sequence spans 274 residues: Momilactone A synthase (274 aa).

The protein belongs to the short-chain dehydrogenases/reductases (SDR) family.

The enzyme catalyses 3beta-hydroxy-9beta-pimara-7,15-dien-19,6beta-olide + NAD(+) = momilactone A + NADH + H(+). It carries out the reaction 3beta-hydroxy-9beta-pimara-7,15-dien-19,6beta-olide + NADP(+) = momilactone A + NADPH + H(+). Its function is as follows. Involved in momilactone phytoalexins biosynthesis. Catalyzes the last step of momilactone A biosynthesis. The chain is Momilactone A synthase from Oryza sativa subsp. japonica (Rice).